The primary structure comprises 356 residues: Glycerol-3-phosphate dehydrogenase [NAD(P)+] (356 aa).

Residues Trp-12, Arg-32, Arg-33, and Lys-117 each contribute to the NADPH site. The sn-glycerol 3-phosphate site is built by Lys-117, Gly-151, and Ser-153. An NADPH-binding site is contributed by Ala-155. Sn-glycerol 3-phosphate is bound by residues Lys-206, Asp-265, Arg-276, and Asn-277. Lys-206 serves as the catalytic Proton acceptor. Arg-276 lines the NADPH pocket. Positions 309 and 311 each coordinate NADPH.

The protein belongs to the NAD-dependent glycerol-3-phosphate dehydrogenase family.

The protein resides in the cytoplasm. It catalyses the reaction sn-glycerol 3-phosphate + NAD(+) = dihydroxyacetone phosphate + NADH + H(+). It carries out the reaction sn-glycerol 3-phosphate + NADP(+) = dihydroxyacetone phosphate + NADPH + H(+). It participates in membrane lipid metabolism; glycerophospholipid metabolism. Functionally, catalyzes the reduction of the glycolytic intermediate dihydroxyacetone phosphate (DHAP) to sn-glycerol 3-phosphate (G3P), the key precursor for phospholipid synthesis. This Treponema pallidum (strain Nichols) protein is Glycerol-3-phosphate dehydrogenase [NAD(P)+].